A 608-amino-acid polypeptide reads, in one-letter code: Mitogen-activated protein kinase kinase kinase 1 (608 aa).

The span at 1-13 shows a compositional bias: basic residues; the sequence is MDRILARMKKSTG. The disordered stretch occupies residues 1–20; that stretch reads MDRILARMKKSTGRRGGDKN. Residues 1–325 form a regulatory region region; sequence MDRILARMKK…VSNTSPIYPD (325 aa). Ser-62 carries the post-translational modification Phosphoserine. Residues 192-234 form a binding with MPK4 region; it reads MERTPTIVKSKGYLVPNNVVAVGVGVGGGIKGLRPPVLKPPPA. Disordered stretches follow at residues 228–247 and 256–287; these read VLKP…GSSW and SETV…EAEE. Positions 271-287 are enriched in acidic residues; that stretch reads DGCDEEEGKEEEAEAEE. Positions 333–587 constitute a Protein kinase domain; it reads WQKGQLLGRG…AAELLNHPFV (255 aa). Residues 339–347 and Lys-361 each bind ATP; that span reads LGRGSFGSV. Asp-456 (proton acceptor) is an active-site residue. A Phosphoserine modification is found at Ser-603.

It belongs to the protein kinase superfamily. STE Ser/Thr protein kinase family. MAP kinase kinase kinase subfamily. Interacts with MKK1, MMK2 and MPK4. May form a ternary complex composed of MEKK1 and MKK1/MKK2 and MPK4. Interacts with RACK1A, RACK1B and RACK1C. Binds to CRLK1. Phosphorylated by CRLK1 in response to cold.

It localises to the cell membrane. The protein localises to the endosome. It carries out the reaction L-seryl-[protein] + ATP = O-phospho-L-seryl-[protein] + ADP + H(+). It catalyses the reaction L-threonyl-[protein] + ATP = O-phospho-L-threonyl-[protein] + ADP + H(+). With respect to regulation, activated by cold via CRLK1-mediated phosphorylation and leading to elevated kinase activity towards MKK2. Its function is as follows. The MEKK1, MKK1/MKK2 and MPK4 function in a signaling pathway that modulates the expression of genes responding to biotic and abiotic stresses and also plays an important role in pathogen defense by negatively regulating innate immunity. Involved in the innate immune MAP kinase signaling cascade (MEKK1, MKK4/MKK5 and MPK3/MPK6) downstream of bacterial flagellin receptor FLS2. May be involved in the cold and salinity stress-mediated MAP kinase signaling cascade (MEKK1, MKK1/MKK2 and MPK4/MPK6). Activates by phosphorylation the downstream MKK2, MKK4 and MKK5 in a calcium-dependent manner. The polypeptide is Mitogen-activated protein kinase kinase kinase 1 (MEKK1) (Arabidopsis thaliana (Mouse-ear cress)).